We begin with the raw amino-acid sequence, 203 residues long: High frequency lysogenization protein HflD homolog (203 aa).

It belongs to the HflD family.

The protein localises to the cytoplasm. It localises to the cell inner membrane. This chain is High frequency lysogenization protein HflD homolog, found in Pasteurella multocida (strain Pm70).